The following is a 712-amino-acid chain: Satratoxin biosynthesis SC3 cluster transcription factor SAT20 (712 aa).

Polar residues-rich tracts occupy residues 1 to 10, 25 to 36, 131 to 145, and 269 to 282; these read MPNLPGSSDS, CSSTKPNAAQEN, SEPSVHSTDNPWPSL, and SLPSNPPTALSSTG. Disordered stretches follow at residues 1-43, 115-145, and 264-294; these read MPNL…ELAQ, SQNAFGQGSFDPFVPSSEPSVHSTDNPWPSL, and PVSGASLPSNPPTALSSTGTRKRKRFNKADR. The segment at residues 306 to 339 is a DNA-binding region (zn(2)-C6 fungal-type); that stretch reads CFRCRMYKENCDPGLPCKNCMRVQVTRRTFFGPC. A coiled-coil region spans residues 530–560; sequence QIQIMVAQVMLDKQKNALKRLQERALSKNRH.

It is found in the nucleus. In terms of biological role, transcriptional regulator that may regulate the expression of the satratoxin biosynthesis SC3 cluster, one of the 3 clusters involved in the biosynthesis of satratoxins, trichothecene mycotoxins that are associated with human food poisonings. The protein is Satratoxin biosynthesis SC3 cluster transcription factor SAT20 of Stachybotrys chartarum (strain CBS 109288 / IBT 7711) (Toxic black mold).